We begin with the raw amino-acid sequence, 137 residues long: Small ribosomal subunit protein uS11 (137 aa).

A compositionally biased stretch (polar residues) spans 1-10; that stretch reads MPPKSRSTGP. Disordered stretches follow at residues 1 to 27 and 116 to 137; these read MPPK…IPHG and GTIS…RRRV. Residues 12–21 are compositionally biased toward basic residues; the sequence is KTQKTRRRDK.

This sequence belongs to the universal ribosomal protein uS11 family. As to quaternary structure, part of the 30S ribosomal subunit. Interacts with proteins S7 and S18. Binds to IF-3.

Functionally, located on the platform of the 30S subunit, it bridges several disparate RNA helices of the 16S rRNA. Forms part of the Shine-Dalgarno cleft in the 70S ribosome. In Rhodococcus erythropolis (strain PR4 / NBRC 100887), this protein is Small ribosomal subunit protein uS11.